A 225-amino-acid chain; its full sequence is Ras-related protein Rab-21 (225 aa).

The residue at position 2 (alanine 2) is an N-acetylalanine. Glycine 28, glycine 31, lysine 32, threonine 33, serine 34, asparagine 45, aspartate 46, histidine 48, threonine 50, and threonine 51 together coordinate GTP. Residue threonine 33 coordinates Mg(2+). Residues 43-56 (KFNDKHITTLQASF) carry the Switch 1 motif. Mg(2+)-binding residues include threonine 51 and aspartate 74. A Switch 2 motif is present at residues 76–94 (AGQERFHALGPIYYRDSNG). Glycine 77, asparagine 132, lysine 133, aspartate 135, alanine 163, and lysine 164 together coordinate GTP. The tract at residues 188–225 (ERAKGNGSSQPGTARRGVQIIDDEPQAQTSGGGCCSSG) is disordered. S-geranylgeranyl cysteine attachment occurs at residues cysteine 221 and cysteine 222. Cysteine 222 is subject to Cysteine methyl ester. Residues 223 to 225 (SSG) constitute a propeptide, removed in mature form.

It belongs to the small GTPase superfamily. Rab family. As to quaternary structure, interacts with the cytoplasmic tail of integrins ITGA1, ITGA2, ITGA5, ITGA6, ITGA11 and ITGB1. Interacts with RABGEF1 (via VPS9 domain). Interacts with ANKRD27. Interacts with VAMP7. Interacts (in GTP-bound form) with VAMP8 in response to starvation; the interaction probably regulates VAMP8 endolysosomal trafficking. Interacts (active GTP-bound form) with TMED10; the interaction is indirect and regulates TMED10 abundance and localization at the Golgi. Mg(2+) is required as a cofactor. In terms of tissue distribution, widely expressed. In jejunal tissue, predominantly expressed in the apical region of the epithelial cell layer of the villi, weak expression, if any, in the crypt epithelium. Capillary endothelium and some cell types in the lamina propria also show expression.

The protein localises to the endoplasmic reticulum membrane. It localises to the golgi apparatus. The protein resides in the trans-Golgi network. Its subcellular location is the golgi apparatus membrane. It is found in the early endosome membrane. The protein localises to the cytoplasmic vesicle membrane. It localises to the cleavage furrow. The protein resides in the cell projection. Its subcellular location is the neuron projection. It catalyses the reaction GTP + H2O = GDP + phosphate + H(+). Regulated by guanine nucleotide exchange factors (GEFs) including ANKRD27 and RABGEF1, which promote the exchange of bound GDP for free GTP. Regulated by GTPase activating proteins (GAPs) which increase the GTP hydrolysis activity. Inhibited by GDP dissociation inhibitors (GDIs). In terms of biological role, the small GTPases Rab are key regulators of intracellular membrane trafficking, from the formation of transport vesicles to their fusion with membranes. Rabs cycle between an inactive GDP-bound form and an active GTP-bound form that is able to recruit to membranes different sets of downstream effectors directly responsible for vesicle formation, movement, tethering and fusion. RAB21 is involved in membrane trafficking control. During the mitosis of adherent cells, controls the endosomal trafficking of integrins which is required for the successful completion of cytokinesis. Regulates integrin internalization and recycling, but does not influence the traffic of endosomally translocated receptors in general. As a result, may regulate cell adhesion and migration. Involved in neurite growth. Following SBF2/MTMT13-mediated activation in response to starvation-induced autophagy, binds to and regulates SNARE protein VAMP8 endolysosomal transport required for SNARE-mediated autophagosome-lysosome fusion. Modulates protein levels of the cargo receptors TMED2 and TMED10, and required for appropriate Golgi localization of TMED10. The polypeptide is Ras-related protein Rab-21 (Homo sapiens (Human)).